The chain runs to 341 residues: Phosphoribosylformylglycinamidine cyclo-ligase (341 aa).

Belongs to the AIR synthase family.

It localises to the cytoplasm. The enzyme catalyses 2-formamido-N(1)-(5-O-phospho-beta-D-ribosyl)acetamidine + ATP = 5-amino-1-(5-phospho-beta-D-ribosyl)imidazole + ADP + phosphate + H(+). It participates in purine metabolism; IMP biosynthesis via de novo pathway; 5-amino-1-(5-phospho-D-ribosyl)imidazole from N(2)-formyl-N(1)-(5-phospho-D-ribosyl)glycinamide: step 2/2. The sequence is that of Phosphoribosylformylglycinamidine cyclo-ligase from Alkaliphilus oremlandii (strain OhILAs) (Clostridium oremlandii (strain OhILAs)).